The primary structure comprises 302 residues: NAD kinase 2 (302 aa).

The active-site Proton acceptor is D78. NAD(+)-binding positions include D78–G79, N152–E153, D182, T193–S198, and A217.

It belongs to the NAD kinase family. It depends on a divalent metal cation as a cofactor.

It is found in the cytoplasm. It catalyses the reaction NAD(+) + ATP = ADP + NADP(+) + H(+). Functionally, involved in the regulation of the intracellular balance of NAD and NADP, and is a key enzyme in the biosynthesis of NADP. Catalyzes specifically the phosphorylation on 2'-hydroxyl of the adenosine moiety of NAD to yield NADP. The sequence is that of NAD kinase 2 from Parasynechococcus marenigrum (strain WH8102).